We begin with the raw amino-acid sequence, 241 residues long: Triosephosphate isomerase (241 aa).

Residue 9-11 coordinates substrate; that stretch reads NWK. Catalysis depends on His-96, which acts as the Electrophile. The active-site Proton acceptor is the Glu-165. Substrate contacts are provided by residues Gly-171, Ser-204, and 225-226; that span reads GG.

It belongs to the triosephosphate isomerase family. As to quaternary structure, homodimer.

The protein resides in the cytoplasm. The catalysed reaction is D-glyceraldehyde 3-phosphate = dihydroxyacetone phosphate. It participates in carbohydrate biosynthesis; gluconeogenesis. It functions in the pathway carbohydrate degradation; glycolysis; D-glyceraldehyde 3-phosphate from glycerone phosphate: step 1/1. Involved in the gluconeogenesis. Catalyzes stereospecifically the conversion of dihydroxyacetone phosphate (DHAP) to D-glyceraldehyde-3-phosphate (G3P). In Trichodesmium erythraeum (strain IMS101), this protein is Triosephosphate isomerase.